Reading from the N-terminus, the 461-residue chain is MLKIFNTLSRQKEEFKPIHAGKVGMYVCGITIYDLCHIGHGRTFVAFDVVARYLRYLGYSLTYVRNVTDVDDKIIKRALENNETCEQLTTRMLVEMHKDFDALNLKRPDLEPRATHHIPEIIALTERLIARNHAYVAANGDVMFSVESDPDYGLLSRQDLDQLQAGARVEVADVKRNPMDFVLWKMSKPGEPSWESPWGPGRPGWHIECSAMNGKQLGAHFDIHGGGSDLMFPHHENEIAQSTCAHDGPYVNYWMHSGMVMIDKEKMSKSLNNFFTIRDVLAYYDAETVRYFLMSGHYRSQLNYSEENLKQARASLERLYTALRGTDANATPAGGAEFEARFRAAMDDDFNTPEAYSVLFDIAREVNRLKTEDITAANALAAELRKLAYVLGLLEQDPELFLQSGAQTDDDEVAKIEVLIKQRNDARSSKDWALADSARDQLNELGIVLEDGPQGTTWRRK.

Cys28 lines the Zn(2+) pocket. The 'HIGH' region signature appears at 30–40 (ITIYDLCHIGH). Zn(2+) is bound by residues Cys209, His234, and Glu238. A 'KMSKS' region motif is present at residues 266-270 (KMSKS). An ATP-binding site is contributed by Lys269.

Belongs to the class-I aminoacyl-tRNA synthetase family. In terms of assembly, monomer. Requires Zn(2+) as cofactor.

The protein localises to the cytoplasm. It catalyses the reaction tRNA(Cys) + L-cysteine + ATP = L-cysteinyl-tRNA(Cys) + AMP + diphosphate. The polypeptide is Cysteine--tRNA ligase (Yersinia enterocolitica serotype O:8 / biotype 1B (strain NCTC 13174 / 8081)).